A 436-amino-acid chain; its full sequence is Elongation factor 1-alpha (436 aa).

The tr-type G domain occupies 8–232; the sequence is KPHLNMIVTG…DDFKMAEKPV (225 aa). The G1 stretch occupies residues 17 to 24; sequence GHIDNGKS. 17–24 is a binding site for GTP; that stretch reads GHIDNGKS. Ser24 is a binding site for Mg(2+). The interval 74–78 is G2; that stretch reads GITID. The tract at residues 95-98 is G3; it reads DAPG. Residues 95–99 and 157–160 each bind GTP; these read DAPGH and NKMD. The segment at 157 to 160 is G4; it reads NKMD. Positions 196-198 are G5; it reads SGW.

This sequence belongs to the TRAFAC class translation factor GTPase superfamily. Classic translation factor GTPase family. EF-Tu/EF-1A subfamily.

It localises to the cytoplasm. It catalyses the reaction GTP + H2O = GDP + phosphate + H(+). GTP hydrolase that promotes the GTP-dependent binding of aminoacyl-tRNA to the A-site of ribosomes during protein biosynthesis. The protein is Elongation factor 1-alpha of Cenarchaeum symbiosum (strain A).